Reading from the N-terminus, the 381-residue chain is DNA replication and repair protein RecF (381 aa).

An ATP-binding site is contributed by 30-37; that stretch reads GENAQGKT.

Belongs to the RecF family.

The protein localises to the cytoplasm. Functionally, the RecF protein is involved in DNA metabolism; it is required for DNA replication and normal SOS inducibility. RecF binds preferentially to single-stranded, linear DNA. It also seems to bind ATP. This Lactobacillus delbrueckii subsp. bulgaricus (strain ATCC 11842 / DSM 20081 / BCRC 10696 / JCM 1002 / NBRC 13953 / NCIMB 11778 / NCTC 12712 / WDCM 00102 / Lb 14) protein is DNA replication and repair protein RecF.